Here is a 178-residue protein sequence, read N- to C-terminus: Large ribosomal subunit protein uL30 (178 aa).

The protein belongs to the universal ribosomal protein uL30 family. In terms of assembly, part of the 50S ribosomal subunit.

The protein is Large ribosomal subunit protein uL30 of Pyrobaculum aerophilum (strain ATCC 51768 / DSM 7523 / JCM 9630 / CIP 104966 / NBRC 100827 / IM2).